We begin with the raw amino-acid sequence, 268 residues long: uncharacterized protein (268 aa).

An HTH iclR-type domain is found at 15-77 (NQALIRGLRL…NAAGSYRLTI (63 aa)). Positions 37–56 (LAKLAELANLNKSTAHRLLQ) form a DNA-binding region, H-T-H motif. In terms of domain architecture, IclR-ED spans 92–265 (IIHVASPYLE…AEQISLELGY (174 aa)).

This is an uncharacterized protein from Haemophilus influenzae (strain ATCC 51907 / DSM 11121 / KW20 / Rd).